The sequence spans 222 residues: Phosphoribosylformylglycinamidine synthase subunit PurQ (222 aa).

The 220-residue stretch at 3 to 222 (AAVLVFPGSN…ASLAAALVAA (220 aa)) folds into the Glutamine amidotransferase type-1 domain. Cys-86 (nucleophile) is an active-site residue. Residues His-194 and Glu-196 contribute to the active site.

As to quaternary structure, part of the FGAM synthase complex composed of 1 PurL, 1 PurQ and 2 PurS subunits.

It localises to the cytoplasm. It catalyses the reaction N(2)-formyl-N(1)-(5-phospho-beta-D-ribosyl)glycinamide + L-glutamine + ATP + H2O = 2-formamido-N(1)-(5-O-phospho-beta-D-ribosyl)acetamidine + L-glutamate + ADP + phosphate + H(+). It carries out the reaction L-glutamine + H2O = L-glutamate + NH4(+). Its pathway is purine metabolism; IMP biosynthesis via de novo pathway; 5-amino-1-(5-phospho-D-ribosyl)imidazole from N(2)-formyl-N(1)-(5-phospho-D-ribosyl)glycinamide: step 1/2. Its function is as follows. Part of the phosphoribosylformylglycinamidine synthase complex involved in the purines biosynthetic pathway. Catalyzes the ATP-dependent conversion of formylglycinamide ribonucleotide (FGAR) and glutamine to yield formylglycinamidine ribonucleotide (FGAM) and glutamate. The FGAM synthase complex is composed of three subunits. PurQ produces an ammonia molecule by converting glutamine to glutamate. PurL transfers the ammonia molecule to FGAR to form FGAM in an ATP-dependent manner. PurS interacts with PurQ and PurL and is thought to assist in the transfer of the ammonia molecule from PurQ to PurL. The protein is Phosphoribosylformylglycinamidine synthase subunit PurQ of Jannaschia sp. (strain CCS1).